Here is a 223-residue protein sequence, read N- to C-terminus: Urease accessory protein UreF (223 aa).

This sequence belongs to the UreF family. UreD, UreF and UreG form a complex that acts as a GTP-hydrolysis-dependent molecular chaperone, activating the urease apoprotein by helping to assemble the nickel containing metallocenter of UreC. The UreE protein probably delivers the nickel.

It localises to the cytoplasm. Its function is as follows. Required for maturation of urease via the functional incorporation of the urease nickel metallocenter. This is Urease accessory protein UreF from Rhizobium leguminosarum bv. viciae.